The sequence spans 336 residues: Ornithine carbamoyltransferase, catabolic (336 aa).

Carbamoyl phosphate is bound by residues 62 to 65 (STRT), Gln89, Arg113, and 140 to 143 (HPTQ). Residues Asn172, Asp236, and 240 to 241 (SM) contribute to the L-ornithine site. Carbamoyl phosphate is bound by residues 277-278 (CL) and Arg322.

It belongs to the aspartate/ornithine carbamoyltransferase superfamily. OTCase family.

Its subcellular location is the cytoplasm. It catalyses the reaction carbamoyl phosphate + L-ornithine = L-citrulline + phosphate + H(+). The protein operates within amino-acid degradation; L-arginine degradation via ADI pathway; carbamoyl phosphate from L-arginine: step 2/2. Its function is as follows. Reversibly catalyzes the transfer of the carbamoyl group from carbamoyl phosphate (CP) to the N(epsilon) atom of ornithine (ORN) to produce L-citrulline. This Staphylococcus aureus (strain MRSA252) protein is Ornithine carbamoyltransferase, catabolic.